The sequence spans 494 residues: Glycerol kinase (494 aa).

Threonine 12 lines the ADP pocket. 3 residues coordinate ATP: threonine 12, threonine 13, and serine 14. Sn-glycerol 3-phosphate is bound at residue threonine 12. Arginine 16 contacts ADP. Sn-glycerol 3-phosphate is bound by residues arginine 82, glutamate 83, tyrosine 134, and aspartate 241. Residues arginine 82, glutamate 83, tyrosine 134, aspartate 241, and glutamine 242 each contribute to the glycerol site. Residues threonine 263 and glycine 306 each contribute to the ADP site. Residues threonine 263, glycine 306, glutamine 310, and glycine 407 each coordinate ATP. Glycine 407 provides a ligand contact to ADP.

Belongs to the FGGY kinase family.

It carries out the reaction glycerol + ATP = sn-glycerol 3-phosphate + ADP + H(+). The protein operates within polyol metabolism; glycerol degradation via glycerol kinase pathway; sn-glycerol 3-phosphate from glycerol: step 1/1. Its activity is regulated as follows. Inhibited by fructose 1,6-bisphosphate (FBP). Its function is as follows. Key enzyme in the regulation of glycerol uptake and metabolism. Catalyzes the phosphorylation of glycerol to yield sn-glycerol 3-phosphate. This is Glycerol kinase from Brachyspira hyodysenteriae (strain ATCC 49526 / WA1).